Reading from the N-terminus, the 510-residue chain is NAD(P)H-quinone oxidoreductase subunit 2 B, chloroplastic (510 aa).

The next 13 membrane-spanning stretches (helical) occupy residues 24–44 (LLLF…GLIL), 57–77 (IPWL…ALLF), 99–119 (IFQF…VEYI), 124–144 (MAIT…MFLC), 149–169 (LITI…LSGY), 183–203 (YLLM…WLYG), 227–247 (PGIS…LSPA), 295–315 (WHLL…LIAI), 323–343 (MLAY…IVGD), 354–374 (YMLF…SFGL), 392–412 (AFLA…PPLA), 418–438 (LHLF…IGLL), and 482–502 (LSMI…NPII).

The protein belongs to the complex I subunit 2 family. As to quaternary structure, NDH is composed of at least 16 different subunits, 5 of which are encoded in the nucleus.

The protein localises to the plastid. It localises to the chloroplast thylakoid membrane. The catalysed reaction is a plastoquinone + NADH + (n+1) H(+)(in) = a plastoquinol + NAD(+) + n H(+)(out). It catalyses the reaction a plastoquinone + NADPH + (n+1) H(+)(in) = a plastoquinol + NADP(+) + n H(+)(out). Its function is as follows. NDH shuttles electrons from NAD(P)H:plastoquinone, via FMN and iron-sulfur (Fe-S) centers, to quinones in the photosynthetic chain and possibly in a chloroplast respiratory chain. The immediate electron acceptor for the enzyme in this species is believed to be plastoquinone. Couples the redox reaction to proton translocation, and thus conserves the redox energy in a proton gradient. The protein is NAD(P)H-quinone oxidoreductase subunit 2 B, chloroplastic of Morus indica (Mulberry).